The primary structure comprises 506 residues: Dolichyl pyrophosphate Glc1Man9GlcNAc2 alpha-1,3-glucosyltransferase (506 aa).

The next 12 helical transmembrane spans lie at 10–30, 101–121, 133–153, 176–196, 219–239, 261–281, 305–325, 339–359, 384–401, 406–426, 454–474, and 479–499; these read RLLL…IPSS, VIYF…YGVY, NLIC…HIHF, LLGG…AVTA, LVTI…PFIY, YWAP…AVLL, PFAV…LLAI, GLVA…GWHV, HYFL…PLLY, YPIK…GFAA, YLMG…YFLG, and FLPL…SWIW.

The protein belongs to the ALG6/ALG8 glucosyltransferase family.

The protein localises to the endoplasmic reticulum membrane. The catalysed reaction is an alpha-D-Glc-(1-&gt;3)-alpha-D-Man-(1-&gt;2)-alpha-D-Man-(1-&gt;2)-alpha-D-Man-(1-&gt;3)-[alpha-D-Man-(1-&gt;2)-alpha-D-Man-(1-&gt;3)-[alpha-D-Man-(1-&gt;2)-alpha-D-Man-(1-&gt;6)]-alpha-D-Man-(1-&gt;6)]-beta-D-Man-(1-&gt;4)-beta-D-GlcNAc-(1-&gt;4)-alpha-D-GlcNAc-diphospho-di-trans,poly-cis-dolichol + a di-trans,poly-cis-dolichyl beta-D-glucosyl phosphate = an alpha-D-Glc-(1-&gt;3)-alpha-D-Glc-(1-&gt;3)-alpha-D-Man-(1-&gt;2)-alpha-D-Man-(1-&gt;2)-alpha-D-Man-(1-&gt;3)-[alpha-D-Man-(1-&gt;2)-alpha-D-Man-(1-&gt;3)-[alpha-D-Man-(1-&gt;2)-alpha-D-Man-(1-&gt;6)]-alpha-D-Man-(1-&gt;6)]-beta-D-Man-(1-&gt;4)-beta-D-GlcNAc-(1-&gt;4)-alpha-D-GlcNAc-diphospho-di-trans,poly-cis-dolichol + a di-trans,poly-cis-dolichyl phosphate + H(+). It participates in protein modification; protein glycosylation. Dolichyl pyrophosphate Glc1Man9GlcNAc2 alpha-1,3-glucosyltransferase that operates in the biosynthetic pathway of dolichol-linked oligosaccharides, the glycan precursors employed in protein asparagine (N)-glycosylation. The assembly of dolichol-linked oligosaccharides begins on the cytosolic side of the endoplasmic reticulum membrane and finishes in its lumen. The sequential addition of sugars to dolichol pyrophosphate produces dolichol-linked oligosaccharides containing fourteen sugars, including two GlcNAcs, nine mannoses and three glucoses. Once assembled, the oligosaccharide is transferred from the lipid to nascent proteins by oligosaccharyltransferases. In the lumen of the endoplasmic reticulum, adds the second glucose residue from dolichyl phosphate glucose (Dol-P-Glc) onto the lipid-linked oligosaccharide intermediate Glc(1)Man(9)GlcNAc(2)-PP-Dol to produce Glc(2)Man(9)GlcNAc(2)-PP-Dol. The polypeptide is Dolichyl pyrophosphate Glc1Man9GlcNAc2 alpha-1,3-glucosyltransferase (Arabidopsis thaliana (Mouse-ear cress)).